Reading from the N-terminus, the 468-residue chain is Cysteine--tRNA ligase (468 aa).

Cys-29 is a binding site for Zn(2+). Positions 31 to 41 (PTVYNYIHIGN) match the 'HIGH' region motif. Zn(2+) is bound by residues Cys-209, His-234, and Glu-238. The 'KMSKS' region signature appears at 266–270 (KMSKS). Lys-269 contributes to the ATP binding site.

The protein belongs to the class-I aminoacyl-tRNA synthetase family. In terms of assembly, monomer. Requires Zn(2+) as cofactor.

It localises to the cytoplasm. It carries out the reaction tRNA(Cys) + L-cysteine + ATP = L-cysteinyl-tRNA(Cys) + AMP + diphosphate. The sequence is that of Cysteine--tRNA ligase from Brevibacillus brevis (strain 47 / JCM 6285 / NBRC 100599).